A 492-amino-acid chain; its full sequence is N-succinylglutamate 5-semialdehyde dehydrogenase (492 aa).

NAD(+) is bound at residue 220-225 (GSANTG). Residues glutamate 243 and cysteine 277 contribute to the active site.

It belongs to the aldehyde dehydrogenase family. AstD subfamily.

It carries out the reaction N-succinyl-L-glutamate 5-semialdehyde + NAD(+) + H2O = N-succinyl-L-glutamate + NADH + 2 H(+). Its pathway is amino-acid degradation; L-arginine degradation via AST pathway; L-glutamate and succinate from L-arginine: step 4/5. Functionally, catalyzes the NAD-dependent reduction of succinylglutamate semialdehyde into succinylglutamate. In Escherichia coli O157:H7, this protein is N-succinylglutamate 5-semialdehyde dehydrogenase.